Here is a 355-residue protein sequence, read N- to C-terminus: MHC class I-like protein MILL2 (355 aa).

A signal peptide spans 1–29; that stretch reads MKASSGKPREFRPAVLLLILGLLLRDSRG. Residues 46-137 are alpha-1; it reads RLTRTHTLRY…VINQKSQEEG (92 aa). Intrachain disulfides connect Cys-96–Cys-107, Cys-147–Cys-210, and Cys-249–Cys-306. Asn-104 and Asn-152 each carry an N-linked (GlcNAc...) asparagine glycan. The segment at 138 to 229 is alpha-2; that stretch reads LHTLQATLGC…SLRNGLQDTG (92 aa). The tract at residues 230-323 is alpha-3; it reads PPMVTVTCRN…SIMQTAVSGH (94 aa). In terms of domain architecture, Ig-like C1-type spans 231 to 321; the sequence is PMVTVTCRNY…NHSIMQTAVS (91 aa). Asn-312 carries an N-linked (GlcNAc...) asparagine glycan. The segment at 324–329 is connecting peptide; it reads AAEDSQ. Asp-330 carries GPI-anchor amidated aspartate lipidation. A propeptide spans 331-355 (removed in mature form); sequence VASSATASAGSALPVVLAVALARAN.

This sequence belongs to the MHC class I family. Heterodimer with B2M (beta-2-microglobulin). Post-translationally, N-glycosylated. As to expression, ubiquitously expressed in neonatal and adult tissues.

It is found in the cell membrane. Binds to heparan sulfate proteoglycans on the surface of fibroblast (NIH-3T3) cells. The polypeptide is MHC class I-like protein MILL2 (Mus musculus (Mouse)).